We begin with the raw amino-acid sequence, 125 residues long: Small ribosomal subunit protein bS6 (125 aa).

Residues 99 to 125 form a disordered region; sequence ASPMVKAREERKPLTEVENNDFEDAEE. Residues 104–113 are compositionally biased toward basic and acidic residues; it reads KAREERKPLT. Residues 116–125 show a composition bias toward acidic residues; the sequence is ENNDFEDAEE.

This sequence belongs to the bacterial ribosomal protein bS6 family.

In terms of biological role, binds together with bS18 to 16S ribosomal RNA. The chain is Small ribosomal subunit protein bS6 from Histophilus somni (strain 2336) (Haemophilus somnus).